Consider the following 209-residue polypeptide: Large ribosomal subunit protein uL3 (209 aa).

Positions 112–122 are enriched in polar residues; the sequence is GTTRGHGTQGN. Residues 112 to 146 form a disordered region; sequence GTTRGHGTQGNIKRWGQSRGPETHGSRYHRIPGSM.

Belongs to the universal ribosomal protein uL3 family. As to quaternary structure, part of the 50S ribosomal subunit. Forms a cluster with proteins L14 and L19.

Functionally, one of the primary rRNA binding proteins, it binds directly near the 3'-end of the 23S rRNA, where it nucleates assembly of the 50S subunit. The chain is Large ribosomal subunit protein uL3 from Lactobacillus johnsonii (strain CNCM I-12250 / La1 / NCC 533).